Reading from the N-terminus, the 400-residue chain is Carnosine N-methyltransferase (400 aa).

Positions 1-49 (MQRRRRAPPASQPAQDSGHSEEVEVQFSAGRLGSAAPAGPPVRGTAEDE) are disordered. Residues Gln-155, Arg-158, Gly-199, Glu-220, Asp-286, Phe-287, and Cys-303 each contribute to the S-adenosyl-L-methionine site. Asp-307 provides a ligand contact to carnosine. Residue Tyr-315 participates in S-adenosyl-L-methionine binding. Carnosine contacts are provided by His-338 and Tyr-389.

This sequence belongs to the carnosine N-methyltransferase family. As to quaternary structure, homodimer. Each monomer accommodates one molecule of carnosine in its active pocket, precisely anchoring the histidine imidazole ring such that only N1 is exposed and deprotonated for methylation. In terms of tissue distribution, expressed at higher level in skeletal muscle compared to other tissues.

It is found in the cytoplasm. The protein localises to the cytosol. Its subcellular location is the nucleus. The enzyme catalyses carnosine + S-adenosyl-L-methionine = anserine + S-adenosyl-L-homocysteine + H(+). Functionally, N-methyltransferase that catalyzes the formation of anserine (beta-alanyl-N(Pi)-methyl-L-histidine) from carnosine. Anserine, a methylated derivative of carnosine (beta-alanyl-L-histidine), is an abundant constituent of vertebrate skeletal muscles. Also methylates other L-histidine-containing di- and tripeptides such as Gly-Gly-His, Gly-His and homocarnosine (GABA-His). The chain is Carnosine N-methyltransferase from Rattus norvegicus (Rat).